A 193-amino-acid polypeptide reads, in one-letter code: Heat shock protein beta-1 (193 aa).

Phosphoserine occurs at positions 15 and 80. Residues 74-182 form the sHSP domain; sequence RALSELSSGI…QSSEITIPVT (109 aa).

This sequence belongs to the small heat shock protein (HSP20) family. Homooligomer. Homodimer; becomes monomeric upon activation. Heterooligomer. Smooth, cardiac and skeletal muscle, hardly detectable in fibroblasts or focal contacts.

It is found in the cytoplasm. It localises to the nucleus. Its subcellular location is the cytoskeleton. The protein localises to the spindle. Functionally, small heat shock protein which functions as a molecular chaperone probably maintaining denatured proteins in a folding-competent state. Plays a role in stress resistance and actin organization. In Gallus gallus (Chicken), this protein is Heat shock protein beta-1 (HSPB1).